Reading from the N-terminus, the 545-residue chain is CTP synthase (545 aa).

Positions 1-266 (MKTNYIFVTG…DDYICKRFSL (266 aa)) are amidoligase domain. Serine 14 serves as a coordination point for CTP. Serine 14 lines the UTP pocket. ATP is bound by residues 15–20 (SLGKGI) and aspartate 72. Positions 72 and 140 each coordinate Mg(2+). Residues 147–149 (DIE), 187–192 (KTKPTQ), and lysine 223 contribute to the CTP site. Residues 187 to 192 (KTKPTQ) and lysine 223 each bind UTP. 239-241 (KDV) contributes to the ATP binding site. Residues 291–542 (TIGMVGKYVE…VKAAGKYQKG (252 aa)) enclose the Glutamine amidotransferase type-1 domain. Glycine 352 provides a ligand contact to L-glutamine. Cysteine 379 acts as the Nucleophile; for glutamine hydrolysis in catalysis. L-glutamine contacts are provided by residues 380 to 383 (LGMQ), glutamate 403, and arginine 470. Residues histidine 515 and glutamate 517 contribute to the active site.

This sequence belongs to the CTP synthase family. In terms of assembly, homotetramer.

It catalyses the reaction UTP + L-glutamine + ATP + H2O = CTP + L-glutamate + ADP + phosphate + 2 H(+). The enzyme catalyses L-glutamine + H2O = L-glutamate + NH4(+). The catalysed reaction is UTP + NH4(+) + ATP = CTP + ADP + phosphate + 2 H(+). Its pathway is pyrimidine metabolism; CTP biosynthesis via de novo pathway; CTP from UDP: step 2/2. Its activity is regulated as follows. Allosterically activated by GTP, when glutamine is the substrate; GTP has no effect on the reaction when ammonia is the substrate. The allosteric effector GTP functions by stabilizing the protein conformation that binds the tetrahedral intermediate(s) formed during glutamine hydrolysis. Inhibited by the product CTP, via allosteric rather than competitive inhibition. Functionally, catalyzes the ATP-dependent amination of UTP to CTP with either L-glutamine or ammonia as the source of nitrogen. Regulates intracellular CTP levels through interactions with the four ribonucleotide triphosphates. In Photorhabdus laumondii subsp. laumondii (strain DSM 15139 / CIP 105565 / TT01) (Photorhabdus luminescens subsp. laumondii), this protein is CTP synthase.